The following is a 382-amino-acid chain: Galactokinase (382 aa).

Residue 34 to 37 coordinates substrate; it reads EHTD. 124 to 130 provides a ligand contact to ATP; sequence GAGLSSS. Mg(2+) contacts are provided by Ser-130 and Glu-162. The active-site Proton acceptor is the Asp-174. Tyr-223 provides a ligand contact to substrate.

The protein belongs to the GHMP kinase family. GalK subfamily.

It is found in the cytoplasm. It carries out the reaction alpha-D-galactose + ATP = alpha-D-galactose 1-phosphate + ADP + H(+). Its pathway is carbohydrate metabolism; galactose metabolism. Catalyzes the transfer of the gamma-phosphate of ATP to D-galactose to form alpha-D-galactose-1-phosphate (Gal-1-P). The chain is Galactokinase from Salmonella heidelberg (strain SL476).